The following is a 133-amino-acid chain: Small ribosomal subunit protein uS11 (133 aa).

A disordered region spans residues 1-23 (MPPKTRGAVRKPRKKDKKNIALG). A compositionally biased stretch (basic residues) spans 7 to 17 (GAVRKPRKKDK).

This sequence belongs to the universal ribosomal protein uS11 family. In terms of assembly, part of the 30S ribosomal subunit. Interacts with proteins S7 and S18. Binds to IF-3.

Its function is as follows. Located on the platform of the 30S subunit, it bridges several disparate RNA helices of the 16S rRNA. Forms part of the Shine-Dalgarno cleft in the 70S ribosome. This chain is Small ribosomal subunit protein uS11, found in Arthrobacter sp. (strain FB24).